The chain runs to 328 residues: scyllo-inositol 2-dehydrogenase (NADP(+)) IolU (328 aa).

Belongs to the Gfo/Idh/MocA family.

The catalysed reaction is scyllo-inositol + NADP(+) = scyllo-inosose + NADPH + H(+). Catalyzes the NADPH-dependent reduction of scyllo-inosose (SIS) to scyllo-inositol (SI) in vitro, but is unable to dehydrogenate scyllo-inositol and myo-inositol. Is less efficient than the functional paralog IolW. Under physiological conditions, may primarily function as an NADPH-dependent oxidoreductase that reduces carbonyl group(s) in its substrates. Cannot use NADH instead of NADPH. This chain is scyllo-inositol 2-dehydrogenase (NADP(+)) IolU, found in Bacillus subtilis (strain 168).